A 499-amino-acid chain; its full sequence is Glycerol kinase (499 aa).

ADP is bound at residue Thr-13. ATP-binding residues include Thr-13, Thr-14, and Ser-15. Sn-glycerol 3-phosphate is bound at residue Thr-13. Arg-17 lines the ADP pocket. Sn-glycerol 3-phosphate-binding residues include Arg-83, Glu-84, Tyr-136, and Asp-246. Positions 83, 84, 136, 246, and 247 each coordinate glycerol. 2 residues coordinate ADP: Thr-268 and Gly-311. Residues Thr-268, Gly-311, Gln-315, and Gly-412 each contribute to the ATP site. Positions 412 and 416 each coordinate ADP.

The protein belongs to the FGGY kinase family.

It catalyses the reaction glycerol + ATP = sn-glycerol 3-phosphate + ADP + H(+). Its pathway is polyol metabolism; glycerol degradation via glycerol kinase pathway; sn-glycerol 3-phosphate from glycerol: step 1/1. With respect to regulation, inhibited by fructose 1,6-bisphosphate (FBP). In terms of biological role, key enzyme in the regulation of glycerol uptake and metabolism. Catalyzes the phosphorylation of glycerol to yield sn-glycerol 3-phosphate. The sequence is that of Glycerol kinase from Francisella philomiragia subsp. philomiragia (strain ATCC 25017 / CCUG 19701 / FSC 153 / O#319-036).